A 367-amino-acid polypeptide reads, in one-letter code: MSDNSQKKVIVGMSGGVDSSVSAYLLQQQGYQVAGLFMKNWEEDDDEEYCSAATDLADAQSVCDKLGIELHTVNFAAEYWDNVFEHFLAEYRAGRTPNPDILCNKEIKFKAFLEFAAEDLNADYIATGHYVRRRDINGKSQLLRGLDNNKDQSYFLYTLSHQQIAQSLFPVGELEKPEVRRIAEKIGLVTAKKKDSTGICFIGERKFRDFLGRYLPAKPGPIMTVDGESLGEHQGLMYHTLGQRKGLGIGGTKEGSEEPWYVIDKDVQNNILIVAQGHEHPRLMSTGLIAQQLYWVDRQTLTEKIHCVVKTRYRQQDIPCSVTPISEDKIEVHFANPVAAVTPGQSAVFYQGEVCLGGGVIEQRLQE.

ATP contacts are provided by residues 12–19 and Met38; that span reads GMSGGVDS. The interaction with target base in tRNA stretch occupies residues 98–100; that stretch reads NPD. Residue Cys103 is the Nucleophile of the active site. Cys103 and Cys200 are joined by a disulfide. Gly128 contacts ATP. An interaction with tRNA region spans residues 150–152; it reads KDQ. Cys200 (cysteine persulfide intermediate) is an active-site residue. The interaction with tRNA stretch occupies residues 312 to 313; that stretch reads RY.

It belongs to the MnmA/TRMU family. Interacts with TusE.

It localises to the cytoplasm. The enzyme catalyses S-sulfanyl-L-cysteinyl-[protein] + uridine(34) in tRNA + AH2 + ATP = 2-thiouridine(34) in tRNA + L-cysteinyl-[protein] + A + AMP + diphosphate + H(+). Its function is as follows. Catalyzes the 2-thiolation of uridine at the wobble position (U34) of tRNA(Lys), tRNA(Glu) and tRNA(Gln), leading to the formation of s(2)U34, the first step of tRNA-mnm(5)s(2)U34 synthesis. Sulfur is provided by IscS, via a sulfur-relay system. Binds ATP and its substrate tRNAs. The sequence is that of tRNA-specific 2-thiouridylase MnmA from Photorhabdus laumondii subsp. laumondii (strain DSM 15139 / CIP 105565 / TT01) (Photorhabdus luminescens subsp. laumondii).